Consider the following 62-residue polypeptide: Photosystem II reaction center protein Z (62 aa).

2 helical membrane-spanning segments follow: residues Ala-8–Ala-28 and Phe-41–Ile-61.

It belongs to the PsbZ family. PSII is composed of 1 copy each of membrane proteins PsbA, PsbB, PsbC, PsbD, PsbE, PsbF, PsbH, PsbI, PsbJ, PsbK, PsbL, PsbM, PsbT, PsbY, PsbZ, Psb30/Ycf12, at least 3 peripheral proteins of the oxygen-evolving complex and a large number of cofactors. It forms dimeric complexes.

The protein localises to the plastid. It is found in the chloroplast thylakoid membrane. Functionally, may control the interaction of photosystem II (PSII) cores with the light-harvesting antenna, regulates electron flow through the 2 photosystem reaction centers. PSII is a light-driven water plastoquinone oxidoreductase, using light energy to abstract electrons from H(2)O, generating a proton gradient subsequently used for ATP formation. The sequence is that of Photosystem II reaction center protein Z from Chara vulgaris (Common stonewort).